The sequence spans 269 residues: Mitochondrial distribution and morphology protein 12 (269 aa).

Residues 1–269 (MSLEVNWEQI…WPNWIEFQGV (269 aa)) form the SMP-LTD domain. The disordered stretch occupies residues 72 to 119 (ERAGTGEGDEDDGRVAPTSTPMKHQTSGSSDQTDASNPISPSTSHDHE). Polar residues predominate over residues 88–114 (PTSTPMKHQTSGSSDQTDASNPISPST).

This sequence belongs to the MDM12 family. As to quaternary structure, component of the ER-mitochondria encounter structure (ERMES) or MDM complex, composed of MMM1, MDM10, MDM12 and MDM34. An MMM1 homodimer associates with one molecule of MDM12 on each side in a pairwise head-to-tail manner, and the SMP-LTD domains of MMM1 and MDM12 generate a continuous hydrophobic tunnel for phospholipid trafficking.

It localises to the mitochondrion outer membrane. The protein resides in the endoplasmic reticulum membrane. Its function is as follows. Component of the ERMES/MDM complex, which serves as a molecular tether to connect the endoplasmic reticulum (ER) and mitochondria. Components of this complex are involved in the control of mitochondrial shape and protein biogenesis, and function in nonvesicular lipid trafficking between the ER and mitochondria. MDM12 is required for the interaction of the ER-resident membrane protein MMM1 and the outer mitochondrial membrane-resident beta-barrel protein MDM10. The MDM12-MMM1 subcomplex functions in the major beta-barrel assembly pathway that is responsible for biogenesis of all mitochondrial outer membrane beta-barrel proteins, and acts in a late step after the SAM complex. The MDM10-MDM12-MMM1 subcomplex further acts in the TOM40-specific pathway after the action of the MDM12-MMM1 complex. Essential for establishing and maintaining the structure of mitochondria and maintenance of mtDNA nucleoids. This is Mitochondrial distribution and morphology protein 12 from Komagataella phaffii (strain GS115 / ATCC 20864) (Yeast).